Here is a 154-residue protein sequence, read N- to C-terminus: MEQEEPCEAKETASSSIEPKTPNPNVPDSIPAIDSDSSLSEEEIVTEKDRGIVTLSPLCKQRIDSASISDCVLVSDDEIIESLYQNLLRVILSLQQIQSVAVVPEIWCFDGCKTPPPSSRNLDSNMVSDTCPGAPMKLTKISRNIDSGLRRKLF.

Residues 1 to 44 (MEQEEPCEAKETASSSIEPKTPNPNVPDSIPAIDSDSSLSEEEI) are disordered. Over residues 27 to 38 (PDSIPAIDSDSS) the composition is skewed to low complexity.

Interacts with CYCB2-4.

Functionally, probable cyclin-dependent protein kinase (CDK) inhibitor that functions as a repressor of mitosis in the endoreduplication cell cycle. The sequence is that of Cyclin-dependent protein kinase inhibitor SMR11 from Arabidopsis thaliana (Mouse-ear cress).